Consider the following 644-residue polypeptide: SPbeta prophage-derived uncharacterized protein YomE (644 aa).

This Bacillus subtilis (strain 168) protein is SPbeta prophage-derived uncharacterized protein YomE (yomE).